The chain runs to 177 residues: Retrograde regulation protein 1 (177 aa).

Residues 1–24 form a disordered region; it reads MSSIPAGTDPGSCGANFKNDRKRR. A bHLH domain is found at 11-96; sequence GSCGANFKND…TQAVEYISHL (86 aa). A phosphoserine mark is found at Ser50 and Ser52. 2 disordered regions span residues 52-82 and 147-177; these read SNDT…KPNK and LAAT…GNGS. Thr60 carries the post-translational modification Phosphothreonine. Residues 168–177 are compositionally biased toward gly residues; the sequence is GGYGEYGNGS.

Binds DNA as a heterodimer with RTG3.

Its subcellular location is the nucleus. Functionally, required for a novel path of interorganelle communication between mitochondria, peroxisomes and the nucleus, thereby maintaining a functional metabolic interaction between the tricarboxylic acid and glyoxylate cycles. Transcription factor that regulates CIT2 gene expression. Binds to two identical sites oriented as inverted repeats 28 bp apart in a regulatory upstream activation sequence element (UASR) in the CIT2 promoter. The core binding site is 5'-GGTCAC-3'. The chain is Retrograde regulation protein 1 (RTG1) from Saccharomyces cerevisiae (strain ATCC 204508 / S288c) (Baker's yeast).